Here is a 372-residue protein sequence, read N- to C-terminus: Lipoyl synthase, mitochondrial (372 aa).

Cysteine 106, cysteine 111, cysteine 117, cysteine 137, cysteine 141, cysteine 144, and serine 352 together coordinate [4Fe-4S] cluster. The 220-residue stretch at 122 to 341 (EYGTATATIM…EKAGNELGFL (220 aa)) folds into the Radical SAM core domain.

This sequence belongs to the radical SAM superfamily. Lipoyl synthase family. [4Fe-4S] cluster is required as a cofactor.

Its subcellular location is the mitochondrion. The catalysed reaction is [[Fe-S] cluster scaffold protein carrying a second [4Fe-4S](2+) cluster] + N(6)-octanoyl-L-lysyl-[protein] + 2 oxidized [2Fe-2S]-[ferredoxin] + 2 S-adenosyl-L-methionine + 4 H(+) = [[Fe-S] cluster scaffold protein] + N(6)-[(R)-dihydrolipoyl]-L-lysyl-[protein] + 4 Fe(3+) + 2 hydrogen sulfide + 2 5'-deoxyadenosine + 2 L-methionine + 2 reduced [2Fe-2S]-[ferredoxin]. It participates in protein modification; protein lipoylation via endogenous pathway; protein N(6)-(lipoyl)lysine from octanoyl-[acyl-carrier-protein]: step 2/2. Catalyzes the radical-mediated insertion of two sulfur atoms into the C-6 and C-8 positions of the octanoyl moiety bound to the lipoyl domains of lipoate-dependent enzymes, thereby converting the octanoylated domains into lipoylated derivatives. In Xenopus laevis (African clawed frog), this protein is Lipoyl synthase, mitochondrial (lias).